Reading from the N-terminus, the 94-residue chain is C-C motif chemokine 17 (94 aa).

An N-terminal signal peptide occupies residues 1 to 23 (MAPLKMLALVILLLGASLQHIHA). Cystine bridges form between cysteine 33–cysteine 57 and cysteine 34–cysteine 73.

Belongs to the intercrine beta (chemokine CC) family.

The protein localises to the secreted. Chemokine, which displays chemotactic activity for T lymphocytes, preferentially Th2 cells, but not monocytes or granulocytes. Therefore plays an important role in a wide range of inflammatory and immunological processes. Acts by binding to CCR4 at T-cell surface. Mediates GM-CSF/CSF2-driven pain and inflammation. In the brain, required to maintain the typical, highly branched morphology of hippocampal microglia under homeostatic conditions. May be important for the appropriate adaptation of microglial morphology and synaptic plasticity to acute lipopolysaccharide (LPS)-induced neuroinflammation. Plays a role in wound healing, mainly by inducing fibroblast migration into the wound. The protein is C-C motif chemokine 17 (CCL17) of Macaca mulatta (Rhesus macaque).